Reading from the N-terminus, the 29-residue chain is Dermaseptin-1.2TR (29 aa).

The residue at position 29 (valine 29) is a Valine amide.

As to expression, expressed by the skin glands.

It localises to the secreted. Has antimicrobial activity. This Phyllomedusa trinitatis (Trinidad leaf frog) protein is Dermaseptin-1.2TR.